We begin with the raw amino-acid sequence, 255 residues long: Imidazole glycerol phosphate synthase subunit HisF (255 aa).

Residues aspartate 11 and aspartate 130 contribute to the active site.

The protein belongs to the HisA/HisF family. As to quaternary structure, heterodimer of HisH and HisF.

It localises to the cytoplasm. It carries out the reaction 5-[(5-phospho-1-deoxy-D-ribulos-1-ylimino)methylamino]-1-(5-phospho-beta-D-ribosyl)imidazole-4-carboxamide + L-glutamine = D-erythro-1-(imidazol-4-yl)glycerol 3-phosphate + 5-amino-1-(5-phospho-beta-D-ribosyl)imidazole-4-carboxamide + L-glutamate + H(+). It functions in the pathway amino-acid biosynthesis; L-histidine biosynthesis; L-histidine from 5-phospho-alpha-D-ribose 1-diphosphate: step 5/9. Its function is as follows. IGPS catalyzes the conversion of PRFAR and glutamine to IGP, AICAR and glutamate. The HisF subunit catalyzes the cyclization activity that produces IGP and AICAR from PRFAR using the ammonia provided by the HisH subunit. In Rhodopseudomonas palustris (strain HaA2), this protein is Imidazole glycerol phosphate synthase subunit HisF.